Consider the following 151-residue polypeptide: uncharacterized protein (151 aa).

Residues 2–133 form the Response regulatory domain; sequence KTLIVEDNPK…VFVEAVHYSQ (132 aa). The residue at position 53 (aspartate 53) is a 4-aspartylphosphate.

This is an uncharacterized protein from Sinorhizobium fredii (strain NBRC 101917 / NGR234).